The chain runs to 111 residues: UPF0145 protein BMA10229_A0446 (111 aa).

Belongs to the UPF0145 family.

The protein is UPF0145 protein BMA10229_A0446 of Burkholderia mallei (strain NCTC 10229).